The chain runs to 583 residues: Cationic amino acid transporter 6, chloroplastic (583 aa).

The N-terminal 50 residues, 1–50, are a transit peptide targeting the chloroplast; it reads MEVQSSSNNGGHSSFSSLRVYLNSLSATPSRLSRRAISVSTSSDEMSRVR. The next 14 membrane-spanning stretches (helical) occupy residues 63 to 83, 91 to 111, 132 to 152, 186 to 206, 216 to 236, 255 to 275, 294 to 314, 347 to 367, 397 to 417, 418 to 438, 450 to 470, 481 to 501, 509 to 529, and 541 to 561; these read WYDLIGLGIGGMVGAGVFVTT, AGPSIVVSYAIAGLCALLSAF, ITFGEFPAFFTGANLVMDYVM, GFNEIDPVAVLVVLVITVIIC, NMIMTAFHIAFIFFVIVMGFI, FFPFGAAGVFNGAAMVYLSYI, IPVGVSGSVAIVTVLYCLMAV, VVGIGASFGILTSLLVAMLGQ, ASTFLGIFTAALALFTDLNVL, LNLVSIGTLFVFYMVANALIF, WPTLCFLTLFSITSLVFTLIW, FMLGASAVVAIAIVLSFQCVV, LWGVPFMPWTPCVSIFLNIFL, and FGFFSGLIVLVYLFYGVHASS.

This sequence belongs to the amino acid-polyamine-organocation (APC) superfamily. Cationic amino acid transporter (CAT) (TC 2.A.3.3) family. In terms of tissue distribution, expressed in roots, stems, flowers, and leaves.

The protein resides in the plastid. It is found in the chloroplast membrane. In terms of biological role, permease involved in the transport of the cationic neutral or acidic amino acids. This Arabidopsis thaliana (Mouse-ear cress) protein is Cationic amino acid transporter 6, chloroplastic (CAT6).